The primary structure comprises 217 residues: Cytochrome c biogenesis ATP-binding export protein CcmA (217 aa).

Residues 6 to 215 enclose the ABC transporter domain; the sequence is FSAKNLACVR…HLDQFAVAEE (210 aa). 38 to 45 provides a ligand contact to ATP; that stretch reads GPNGSGKS.

This sequence belongs to the ABC transporter superfamily. CcmA exporter (TC 3.A.1.107) family. In terms of assembly, the complex is composed of two ATP-binding proteins (CcmA) and two transmembrane proteins (CcmB).

It is found in the cell inner membrane. It carries out the reaction heme b(in) + ATP + H2O = heme b(out) + ADP + phosphate + H(+). Functionally, part of the ABC transporter complex CcmAB involved in the biogenesis of c-type cytochromes; once thought to export heme, this seems not to be the case, but its exact role is uncertain. Responsible for energy coupling to the transport system. This is Cytochrome c biogenesis ATP-binding export protein CcmA from Paramagnetospirillum magneticum (strain ATCC 700264 / AMB-1) (Magnetospirillum magneticum).